The chain runs to 299 residues: ATP phosphoribosyltransferase (299 aa).

This sequence belongs to the ATP phosphoribosyltransferase family. Long subfamily. Mg(2+) serves as cofactor.

The protein resides in the cytoplasm. It carries out the reaction 1-(5-phospho-beta-D-ribosyl)-ATP + diphosphate = 5-phospho-alpha-D-ribose 1-diphosphate + ATP. The protein operates within amino-acid biosynthesis; L-histidine biosynthesis; L-histidine from 5-phospho-alpha-D-ribose 1-diphosphate: step 1/9. With respect to regulation, feedback inhibited by histidine. Catalyzes the condensation of ATP and 5-phosphoribose 1-diphosphate to form N'-(5'-phosphoribosyl)-ATP (PR-ATP). Has a crucial role in the pathway because the rate of histidine biosynthesis seems to be controlled primarily by regulation of HisG enzymatic activity. This chain is ATP phosphoribosyltransferase, found in Shewanella loihica (strain ATCC BAA-1088 / PV-4).